The following is a 145-amino-acid chain: Small ribosomal subunit protein uS12 (145 aa).

Position 64 is a hydroxyproline (P64).

This sequence belongs to the universal ribosomal protein uS12 family.

This chain is Small ribosomal subunit protein uS12 (rps23), found in Aspergillus fumigatus (strain ATCC MYA-4609 / CBS 101355 / FGSC A1100 / Af293) (Neosartorya fumigata).